Reading from the N-terminus, the 148-residue chain is 3-hydroxyacyl-[acyl-carrier-protein] dehydratase FabZ (148 aa).

His50 is an active-site residue.

Belongs to the thioester dehydratase family. FabZ subfamily.

It localises to the cytoplasm. The enzyme catalyses a (3R)-hydroxyacyl-[ACP] = a (2E)-enoyl-[ACP] + H2O. Its function is as follows. Involved in unsaturated fatty acids biosynthesis. Catalyzes the dehydration of short chain beta-hydroxyacyl-ACPs and long chain saturated and unsaturated beta-hydroxyacyl-ACPs. The polypeptide is 3-hydroxyacyl-[acyl-carrier-protein] dehydratase FabZ (Lactobacillus helveticus (strain DPC 4571)).